Reading from the N-terminus, the 180-residue chain is Large ribosomal subunit protein uL5 (180 aa).

This sequence belongs to the universal ribosomal protein uL5 family. In terms of assembly, part of the 50S ribosomal subunit; part of the 5S rRNA/L5/L18/L25 subcomplex. Contacts the 5S rRNA and the P site tRNA. Forms a bridge to the 30S subunit in the 70S ribosome.

Its function is as follows. This is one of the proteins that bind and probably mediate the attachment of the 5S RNA into the large ribosomal subunit, where it forms part of the central protuberance. In the 70S ribosome it contacts protein S13 of the 30S subunit (bridge B1b), connecting the 2 subunits; this bridge is implicated in subunit movement. Contacts the P site tRNA; the 5S rRNA and some of its associated proteins might help stabilize positioning of ribosome-bound tRNAs. This Xanthomonas euvesicatoria pv. vesicatoria (strain 85-10) (Xanthomonas campestris pv. vesicatoria) protein is Large ribosomal subunit protein uL5.